Here is a 490-residue protein sequence, read N- to C-terminus: Adenylosuccinate synthetase, chloroplastic (490 aa).

The N-terminal 45 residues, 1-45 (MSLSSLTLDSNPRFAVGGPYHRRYPPLHHPRSFVSCSAKRPAVSA), are a transit peptide targeting the chloroplast. An N-acetylserine modification is found at S46. Residues 77–83 (GDEGKGK) and 105–107 (GHT) each bind GTP. The Proton acceptor role is filled by D78. Residues D78 and G105 each contribute to the Mg(2+) site. IMP-binding positions include 78–81 (DEGK), 103–106 (NAGH), T195, R209, Q289, T304, and R368. Residue H106 is the Proton donor of the active site. 364–370 (TTTGRPR) is a substrate binding site. GTP contacts are provided by residues R370, 396 to 398 (KLD), and 479 to 481 (GIG).

The protein belongs to the adenylosuccinate synthetase family. Homodimer. It depends on Mg(2+) as a cofactor.

It is found in the plastid. It localises to the chloroplast. It carries out the reaction IMP + L-aspartate + GTP = N(6)-(1,2-dicarboxyethyl)-AMP + GDP + phosphate + 2 H(+). Its pathway is purine metabolism; AMP biosynthesis via de novo pathway; AMP from IMP: step 1/2. Plays an important role in the de novo pathway and in the salvage pathway of purine nucleotide biosynthesis. Catalyzes the first committed step in the biosynthesis of AMP from IMP. The polypeptide is Adenylosuccinate synthetase, chloroplastic (Arabidopsis thaliana (Mouse-ear cress)).